The sequence spans 235 residues: MKHGSVPATPEAASLVFGDRLEAAELYARILAGAGVEWGLLGPREVDRVWERHILNSAALGELMEPGERVADIGSGAGLPGIPLALARPDIHVTLIEPLLRRSEFLRETVTELGLDVTVVRGRAEDREVRDRVGEMDVVTSRAVASLDKLTRWSVPFLRDGGRMLPIKGERAEVEIEEHRRVMESLGAVDARVVRCGANYLSPPVTVVDARRRAAKPGRNKSGRTARSRGRTGRR.

Residues G74, L79, 124 to 125 (AE), and R142 contribute to the S-adenosyl-L-methionine site. The interval 211 to 235 (RRRAAKPGRNKSGRTARSRGRTGRR) is disordered. Positions 213 to 235 (RAAKPGRNKSGRTARSRGRTGRR) are enriched in basic residues.

Belongs to the methyltransferase superfamily. RNA methyltransferase RsmG family.

The protein resides in the cytoplasm. Specifically methylates the N7 position of guanine in position 518 of 16S rRNA. The polypeptide is Ribosomal RNA small subunit methyltransferase G (Mycolicibacterium smegmatis (strain ATCC 700084 / mc(2)155) (Mycobacterium smegmatis)).